A 1325-amino-acid polypeptide reads, in one-letter code: Nucleoporin nup146 (1325 aa).

4 disordered regions span residues 1 to 20 (MNAE…AGGS), 453 to 474 (VRAS…FVKN), 758 to 951 (GEGL…PKIH), and 973 to 994 (FPKQ…QESL). Polar residues predominate over residues 763 to 778 (QQKTSKALPSTGITKL). Positions 779–791 (SENDNEKAEESNE) are enriched in basic and acidic residues. Residues 792–801 (TKGFNTTIAK) are compositionally biased toward polar residues. Over residues 802–811 (QNDKSSKSEG) the composition is skewed to basic and acidic residues. Composition is skewed to polar residues over residues 816–835 (ANMS…SKPS) and 850–861 (FTFNKPSETPPF). Over residues 867-881 (LVEKESKQDVSDTSD) the composition is skewed to basic and acidic residues. Threonine 899 carries the post-translational modification Phosphothreonine. Over residues 927 to 937 (SEIEDQDEESS) the composition is skewed to acidic residues. Phosphothreonine is present on threonine 946. Phosphoserine is present on residues serine 1041, serine 1043, and serine 1044.

The protein localises to the cytoplasm. The protein resides in the nucleus. Functions as a component of the nuclear pore complex (NPC). NPC components, collectively referred to as nucleoporins (NUPs), can play the role of both NPC structural components and of docking or interaction partners for transiently associated nuclear transport factors. Active directional transport is assured by both, a Phe-Gly (FG) repeat affinity gradient for these transport factors across the NPC and a transport cofactor concentration gradient across the nuclear envelope. The chain is Nucleoporin nup146 (nup146) from Schizosaccharomyces pombe (strain 972 / ATCC 24843) (Fission yeast).